The primary structure comprises 100 residues: Putative pterin-4-alpha-carbinolamine dehydratase (100 aa).

This sequence belongs to the pterin-4-alpha-carbinolamine dehydratase family.

It carries out the reaction (4aS,6R)-4a-hydroxy-L-erythro-5,6,7,8-tetrahydrobiopterin = (6R)-L-erythro-6,7-dihydrobiopterin + H2O. The protein is Putative pterin-4-alpha-carbinolamine dehydratase of Afipia carboxidovorans (strain ATCC 49405 / DSM 1227 / KCTC 32145 / OM5) (Oligotropha carboxidovorans).